The following is a 201-amino-acid chain: Glutathione peroxidase 1 (201 aa).

Phosphoserine is present on S32. U47 is an active-site residue. Position 47 (U47) is a non-standard amino acid, selenocysteine. An N6-acetyllysine; alternate mark is found at K86, K112, and K146. N6-succinyllysine; alternate is present on residues K86, K112, and K146. Phosphoserine occurs at positions 195 and 199.

Belongs to the glutathione peroxidase family. Homotetramer. Interacts with MIEN1. In terms of processing, during periods of oxidative stress, Sec-47 may react with a superoxide radical, irreversibly lose hydroselenide and be converted to dehydroalanine.

The protein resides in the cytoplasm. Its subcellular location is the mitochondrion. The catalysed reaction is 2 glutathione + H2O2 = glutathione disulfide + 2 H2O. It catalyses the reaction a hydroperoxy polyunsaturated fatty acid + 2 glutathione = a hydroxy polyunsaturated fatty acid + glutathione disulfide + H2O. It carries out the reaction tert-butyl hydroperoxide + 2 glutathione = tert-butanol + glutathione disulfide + H2O. The enzyme catalyses cumene hydroperoxide + 2 glutathione = 2-phenylpropan-2-ol + glutathione disulfide + H2O. The catalysed reaction is (13S)-hydroperoxy-(9Z,11E)-octadecadienoate + 2 glutathione = (13S)-hydroxy-(9Z,11E)-octadecadienoate + glutathione disulfide + H2O. It catalyses the reaction (9S)-hydroperoxy-(10E,12Z)-octadecadienoate + 2 glutathione = (9S)-hydroxy-(10E,12Z)-octadecadienoate + glutathione disulfide + H2O. It carries out the reaction (5S)-hydroperoxy-(6E,8Z,11Z,14Z)-eicosatetraenoate + 2 glutathione = (5S)-hydroxy-(6E,8Z,11Z,14Z)-eicosatetraenoate + glutathione disulfide + H2O. The enzyme catalyses (12S)-hydroperoxy-(5Z,8Z,10E,14Z)-eicosatetraenoate + 2 glutathione = (12S)-hydroxy-(5Z,8Z,10E,14Z)-eicosatetraenoate + glutathione disulfide + H2O. The catalysed reaction is (12R)-hydroperoxy-(5Z,8Z,10E,14Z)-eicosatetraenoate + 2 glutathione = (12R)-hydroxy-(5Z,8Z,10E,14Z)-eicosatetraenoate + glutathione disulfide + H2O. It catalyses the reaction (15S)-hydroperoxy-(5Z,8Z,11Z,13E)-eicosatetraenoate + 2 glutathione = (15S)-hydroxy-(5Z,8Z,11Z,13E)-eicosatetraenoate + glutathione disulfide + H2O. It carries out the reaction (5S)-hydroperoxy-(6E,8Z,11Z,14Z,17Z)-eicosapentaenoate + 2 glutathione = (5S)-hydroxy-(6E,8Z,11Z,14Z,17Z)-eicosapentaenoate + glutathione disulfide + H2O. The enzyme catalyses (12S)-hydroperoxy-(5Z,8Z,10E,14Z,17Z)-eicosapentaenoate + 2 glutathione = (12S)-hydroxy-(5Z,8Z,10E,14Z,17Z)-eicosapentaenoate + glutathione disulfide + H2O. The catalysed reaction is (15S)-hydroperoxy-(5Z,8Z,11Z,13E,17Z)-eicosapentaenoate + 2 glutathione = (15S)-hydroxy-(5Z,8Z,11Z,13E,17Z)-eicosapentaenoate + glutathione disulfide + H2O. It catalyses the reaction (15S)-hydroperoxy-(11Z,13E)-eicosadienoate + 2 glutathione = (15S)-hydroxy-(11Z,13E)-eicosadienoate + glutathione disulfide + H2O. It carries out the reaction (17S)-hydroperoxy-(4Z,7Z,10Z,13Z,15E,19Z)-docosahexaenoate + 2 glutathione = (17S)-hydroxy-(4Z,7Z,10Z,13Z,15E,19Z)-docosahexaenoate + glutathione disulfide + H2O. In terms of biological role, catalyzes the reduction of hydroperoxides in a glutathione-dependent manner thus regulating cellular redox homeostasis. Can reduce small soluble hydroperoxides such as H2O2, cumene hydroperoxide and tert-butyl hydroperoxide, as well as several fatty acid-derived hydroperoxides. In platelets catalyzes the reduction of 12-hydroperoxyeicosatetraenoic acid, the primary product of the arachidonate 12-lipoxygenase pathway. The polypeptide is Glutathione peroxidase 1 (GPX1) (Pongo pygmaeus (Bornean orangutan)).